Here is a 151-residue protein sequence, read N- to C-terminus: Ubiquitin-conjugating enzyme E2 2 (151 aa).

Residues A4–E150 form the UBC core domain. The active-site Glycyl thioester intermediate is the C88.

It belongs to the ubiquitin-conjugating enzyme family.

The protein resides in the cytoplasm. It localises to the nucleus. It carries out the reaction S-ubiquitinyl-[E1 ubiquitin-activating enzyme]-L-cysteine + [E2 ubiquitin-conjugating enzyme]-L-cysteine = [E1 ubiquitin-activating enzyme]-L-cysteine + S-ubiquitinyl-[E2 ubiquitin-conjugating enzyme]-L-cysteine.. It participates in protein modification; protein ubiquitination. Its function is as follows. Catalyzes the covalent attachment of ubiquitin to other proteins. Plays a role in transcription regulation by catalyzing the monoubiquitination of histone H2B to form H2BK123ub1. H2BK123ub1 gives a specific tag for epigenetic transcriptional activation and is also a prerequisite for H3K4me and H3K79me formation. Also involved in postreplication repair of UV-damaged DNA, in N-end rule-dependent protein degradation and in sporulation. This is Ubiquitin-conjugating enzyme E2 2 (UBC2) from Trichoderma harzianum (Hypocrea lixii).